A 1037-amino-acid polypeptide reads, in one-letter code: Tyrosine-protein kinase-like otk (1037 aa).

The first 22 residues, 1-22 (MAALRISVWILVQALMMALVSS), serve as a signal peptide directing secretion. N-linked (GlcNAc...) asparagine glycosylation is found at Asn-23 and Asn-39. The Extracellular segment spans residues 23–582 (NSSHFLQLPQ…GGDGFLVTRA (560 aa)). Ig-like C2-type domains follow at residues 25–115 (SHFL…AKLS), 114–200 (LSVI…RVMS), 252–366 (PEDL…APIN), 369–464 (PGTL…VAIN), and 469–559 (PKFS…VQLV). Disulfide bonds link Cys-46-Cys-96, Cys-138-Cys-189, Cys-277-Cys-355, and Cys-400-Cys-448. Asn-337, Asn-418, Asn-430, Asn-445, Asn-458, Asn-513, and Asn-525 each carry an N-linked (GlcNAc...) asparagine glycan. Cys-491 and Cys-543 are joined by a disulfide. A helical membrane pass occupies residues 583–603 (VLITMTVALAYIVLVVGLMLW). At 604–1037 (CRYRRQARKA…LSKAMQSLEK (434 aa)) the chain is on the cytoplasmic side. Disordered regions lie at residues 618-681 (LSTK…KKSA) and 719-764 (ATGS…KTSM). A compositionally biased stretch (polar residues) spans 653-675 (QSRSKSNGDAQKSDDTACSQQSR). Ser-680 is subject to Phosphoserine. The 342-residue stretch at 694–1035 (LTELIQIGRG…AALSKAMQSL (342 aa)) folds into the Protein kinase; inactive domain. Residues 724–735 (SDKDADTEKQHS) show a composition bias toward basic and acidic residues.

This sequence belongs to the protein kinase superfamily. Tyr protein kinase family. Insulin receptor subfamily. In terms of assembly, interacts with plexA; component of a receptor complex that mediates the repulsive signaling in response to Semaphorin ligands.

Its subcellular location is the cell membrane. In terms of biological role, acts as a calcium-dependent, homophilic cell adhesion molecule that regulates neural recognition during the development of the nervous system. Component of the repulsive Plexin signaling response to regulate motor axon guidance at the embryonic stage. Also component of a receptor complex that is required in the adult visual system to innervate the lamina layer; specific targeting of R1-R6 axons. The polypeptide is Tyrosine-protein kinase-like otk (Drosophila ananassae (Fruit fly)).